The primary structure comprises 714 residues: Forkhead box protein P2 (714 aa).

Over residues 1–28 (MMQESATETISNSSMNQNGMSTLSSQLD) the composition is skewed to polar residues. Disordered stretches follow at residues 1 to 45 (MMQE…SEVS) and 280 to 338 (DNGI…TGAS). Low complexity predominate over residues 291–304 (TTNNSSSTTSSTTS). Residues 314–323 (SIVNGQSSVL) are compositionally biased toward polar residues. Residues 325 to 336 (ARRDSSSHEETG) show a composition bias toward basic and acidic residues. The segment at 345–370 (GVCKWPGCESICEDFGQFLKHLNNEH) adopts a C2H2-type zinc-finger fold. A leucine-zipper region spans residues 387-408 (VQQLEIQLSKERERLQAMMTHL). A CTBP1-binding region spans residues 421–425 (PLNLV). The segment covering 437 to 458 (TSPQSLPQTPTTPTAPVTPITQ) has biased composition (low complexity). The tract at residues 437–464 (TSPQSLPQTPTTPTAPVTPITQGPSVIT) is disordered. A DNA-binding region (fork-head) is located at residues 503 to 593 (RPPFTYATLI…SQKITGSPTL (91 aa)). Disordered stretches follow at residues 648–667 (LDHI…QPHI) and 677–714 (VIAE…EDLE). Over residues 698 to 714 (LEDDREIEEEPLSEDLE) the composition is skewed to acidic residues.

As to quaternary structure, forms homodimers and heterodimers with FOXP1 and FOXP4. Dimerization is required for DNA-binding. Interacts with CTBP1. Interacts with FOXP1. Interacts with TBR1. Interacts with ZMYM2. In terms of tissue distribution, highest expression in lung. Lower expression in spleen, skeletal muscle, brain, kidney and small intestine.

It is found in the nucleus. In terms of biological role, transcriptional repressor that may play a role in the specification and differentiation of lung epithelium. May also play a role in developing neural, gastrointestinal and cardiovascular tissues. Can act with CTBP1 to synergistically repress transcription but CTPBP1 is not essential. Plays a role in synapse formation by regulating SRPX2 levels. The chain is Forkhead box protein P2 (Foxp2) from Mus musculus (Mouse).